Here is a 310-residue protein sequence, read N- to C-terminus: MKASTSRAKLHPRNQHLNGYDLDLLTEQHPALSAFIITTPAGTKSIDFSDNKAVKTLNQALLKAHYNVDFWDIPQHNLCPPIPGRVDYIHYLADLLADDNQTQIPTGRQVKVLDIGTGANLVYPLTGGHEYNWHFTGTDIDPAAIKVAKQIAQFNNLKITLKQQKNAANIFKGVINSKDLYHLTLCNPPFHASSEDAVKGSERKWKNLGKAPSSTLNFGGQNNELWCEGGEVQFISNMIKESAAVAEQVMWFTSLVSKKDNIAALEQELKQHPIAQYKIVDMAQGQKVSRFIAWSYFDKATREQICEELE.

It belongs to the methyltransferase superfamily. METTL16/RlmF family.

The protein resides in the cytoplasm. The catalysed reaction is adenosine(1618) in 23S rRNA + S-adenosyl-L-methionine = N(6)-methyladenosine(1618) in 23S rRNA + S-adenosyl-L-homocysteine + H(+). Specifically methylates the adenine in position 1618 of 23S rRNA. The protein is Ribosomal RNA large subunit methyltransferase F of Pseudoalteromonas translucida (strain TAC 125).